The chain runs to 218 residues: MIEVLNLTKKIKKTTVLDNISYTFEKGTIYGLFGSNGSGKTMLLRALSGLIVPTEGSITIKGEQLHKDISFPKSVGLIIENMQLLPQYDAFTNLKILSKIKKIASDNDILDSISRVGLENFNSVKVSKFSLGMKQRLNIAQAIFEKPDILLLDEPTNAIDEKGVAFVHDILLQEKKRGATIIITSHHKEDIISLCDIALEMNHGRLETSEKVIYKKDS.

Residues 2–216 (IEVLNLTKKI…ETSEKVIYKK (215 aa)) enclose the ABC transporter domain. 34–41 (GSNGSGKT) provides a ligand contact to ATP.

Belongs to the ABC transporter superfamily.

This is an uncharacterized protein from Bacillus subtilis (strain 168).